The chain runs to 246 residues: UDP-N-acetyl-D-mannosaminuronic acid transferase (246 aa).

The protein belongs to the glycosyltransferase 26 family.

It catalyses the reaction UDP-N-acetyl-alpha-D-mannosaminouronate + N-acetyl-alpha-D-glucosaminyl-di-trans,octa-cis-undecaprenyl diphosphate = beta-D-ManNAcA-(1-&gt;4)-alpha-D-GlcNAc-di-trans,octa-cis-undecaprenyl diphosphate + UDP + H(+). The protein operates within bacterial outer membrane biogenesis; enterobacterial common antigen biosynthesis. Catalyzes the synthesis of Und-PP-GlcNAc-ManNAcA (Lipid II), the second lipid-linked intermediate involved in enterobacterial common antigen (ECA) synthesis. This is UDP-N-acetyl-D-mannosaminuronic acid transferase from Salmonella schwarzengrund (strain CVM19633).